Consider the following 203-residue polypeptide: Urease accessory protein UreG (203 aa).

Residue 14–21 (GPVGSGKT) coordinates GTP.

The protein belongs to the SIMIBI class G3E GTPase family. UreG subfamily. In terms of assembly, homodimer. UreD, UreF and UreG form a complex that acts as a GTP-hydrolysis-dependent molecular chaperone, activating the urease apoprotein by helping to assemble the nickel containing metallocenter of UreC. The UreE protein probably delivers the nickel.

Its subcellular location is the cytoplasm. Its function is as follows. Facilitates the functional incorporation of the urease nickel metallocenter. This process requires GTP hydrolysis, probably effectuated by UreG. The polypeptide is Urease accessory protein UreG (Rhizobium leguminosarum bv. trifolii (strain WSM2304)).